We begin with the raw amino-acid sequence, 2564 residues long: Spectrin beta chain, non-erythrocytic 4 (2564 aa).

The tract at residues 1–37 (MAQVPGEVDNMEGLPAPNNNPAARWESPDRGWEREQP) is disordered. Residues 1 to 282 (MAQVPGEVDN…IITYVVSFYH (282 aa)) are actin-binding. Over residues 26-36 (ESPDRGWEREQ) the composition is skewed to basic and acidic residues. Calponin-homology (CH) domains lie at 61-165 (AVQK…LRFQ) and 180-285 (RSAK…HYFS). Spectrin repeat units lie at residues 311-418 (IERY…AALR), 430-533 (LAQR…RLEQ), 536-641 (ALQK…AELE), 774-879 (ALHQ…WLRD), 884-982 (YRMF…RKEE), 1089-1196 (RLQR…EALV), 1306-1407 (ELQH…RQLF), 1412-1512 (ADQL…RLLL), 1515-1617 (KELH…QQVL), 1623-1725 (VEQY…ALEQ), 1728-1830 (WLYQ…AQLL), 1835-1935 (ELHK…EDAR), 1944-2046 (ALRF…WLQQ), and 2049-2123 (EVHQ…QSKQ). The segment at 1853-1872 (KRRRLPRLTTPPEPRPSASS) is disordered. Positions 2208–2225 (PAAPEDAAETPATPAAAE) are enriched in low complexity. Disordered regions lie at residues 2208–2439 (PAAP…KSSN) and 2533–2564 (ARWG…GRRK). 3 stretches are compositionally biased toward basic and acidic residues: residues 2227–2254 (VRPR…RQES), 2268–2278 (ERQESAEHEAA), and 2287–2318 (EQME…DLVK). Residues 2343–2355 (PSLPQPRELPPGR) are compositionally biased toward pro residues. 2 stretches are compositionally biased toward basic and acidic residues: residues 2362–2377 (LPER…ARDR) and 2424–2435 (FLLRKRELDANR). Residues 2418 to 2527 (TVQHEGFLLR…WLEAVASSVA (110 aa)) enclose the PH domain. Polar residues predominate over residues 2538–2547 (TLPTTSSTDE). A compositionally biased stretch (basic and acidic residues) spans 2548–2564 (GNPKREGGDRRASGRRK).

This sequence belongs to the spectrin family. In terms of tissue distribution, expressed in skeletal muscle at the sarcolemma and in the muscle capillaries (at protein level). Abundantly expressed in brain and pancreatic islets.

It localises to the cytoplasm. The protein localises to the cytoskeleton. The protein resides in the cell cortex. The chain is Spectrin beta chain, non-erythrocytic 4 (SPTBN4) from Homo sapiens (Human).